The sequence spans 451 residues: Tol-Pal system protein TolB 1 (451 aa).

Residues 1–19 form the signal peptide; that stretch reads MTLRMLFAFALLAAAPAQA. Residues 18-29 show a composition bias toward low complexity; it reads QAQQTEPQPAEE. Disordered stretches follow at residues 18-37 and 431-451; these read QAQQTEPQPAEEGGLSGTVS and NERRLSTPGDASDPAWGPLLP.

The protein belongs to the TolB family. As to quaternary structure, the Tol-Pal system is composed of five core proteins: the inner membrane proteins TolA, TolQ and TolR, the periplasmic protein TolB and the outer membrane protein Pal. They form a network linking the inner and outer membranes and the peptidoglycan layer.

It localises to the periplasm. Its function is as follows. Part of the Tol-Pal system, which plays a role in outer membrane invagination during cell division and is important for maintaining outer membrane integrity. The polypeptide is Tol-Pal system protein TolB 1 (Novosphingobium aromaticivorans (strain ATCC 700278 / DSM 12444 / CCUG 56034 / CIP 105152 / NBRC 16084 / F199)).